We begin with the raw amino-acid sequence, 234 residues long: Octanoyltransferase (234 aa).

The BPL/LPL catalytic domain maps to 43–231 (IPTRNYFLFV…HFQELFQAEL (189 aa)). Substrate contacts are provided by residues 88-95 (RGGDITYH), 160-162 (AMG), and 173-175 (GFA). Residue Cys-191 is the Acyl-thioester intermediate of the active site.

The protein belongs to the LipB family.

The protein resides in the cytoplasm. It catalyses the reaction octanoyl-[ACP] + L-lysyl-[protein] = N(6)-octanoyl-L-lysyl-[protein] + holo-[ACP] + H(+). The protein operates within protein modification; protein lipoylation via endogenous pathway; protein N(6)-(lipoyl)lysine from octanoyl-[acyl-carrier-protein]: step 1/2. In terms of biological role, catalyzes the transfer of endogenously produced octanoic acid from octanoyl-acyl-carrier-protein onto the lipoyl domains of lipoate-dependent enzymes. Lipoyl-ACP can also act as a substrate although octanoyl-ACP is likely to be the physiological substrate. This Christiangramia forsetii (strain DSM 17595 / CGMCC 1.15422 / KT0803) (Gramella forsetii) protein is Octanoyltransferase.